The sequence spans 158 residues: Transcription elongation factor GreA (158 aa).

The protein belongs to the GreA/GreB family.

Its function is as follows. Necessary for efficient RNA polymerase transcription elongation past template-encoded arresting sites. The arresting sites in DNA have the property of trapping a certain fraction of elongating RNA polymerases that pass through, resulting in locked ternary complexes. Cleavage of the nascent transcript by cleavage factors such as GreA or GreB allows the resumption of elongation from the new 3'terminus. GreA releases sequences of 2 to 3 nucleotides. The polypeptide is Transcription elongation factor GreA (Wigglesworthia glossinidia brevipalpis).